A 306-amino-acid polypeptide reads, in one-letter code: Recombination-associated protein RdgC (306 aa).

Belongs to the RdgC family.

The protein localises to the cytoplasm. The protein resides in the nucleoid. Functionally, may be involved in recombination. The chain is Recombination-associated protein RdgC from Pseudomonas fluorescens (strain SBW25).